A 121-amino-acid chain; its full sequence is Small ribosomal subunit protein uS13 (121 aa).

A disordered region spans residues His-91–Lys-121. Over residues Ala-106–Lys-121 the composition is skewed to basic residues.

Belongs to the universal ribosomal protein uS13 family. As to quaternary structure, part of the 30S ribosomal subunit. Forms a loose heterodimer with protein S19. Forms two bridges to the 50S subunit in the 70S ribosome.

Functionally, located at the top of the head of the 30S subunit, it contacts several helices of the 16S rRNA. In the 70S ribosome it contacts the 23S rRNA (bridge B1a) and protein L5 of the 50S subunit (bridge B1b), connecting the 2 subunits; these bridges are implicated in subunit movement. Contacts the tRNAs in the A and P-sites. The protein is Small ribosomal subunit protein uS13 of Bacillus cereus (strain ZK / E33L).